The chain runs to 22 residues: Alpha-amylase inhibitor DR4 (22 aa).

Residues 1–22 (SGGGKEAAETFNRVESHPRPDA) are disordered.

Functionally, inhibits insect alpha-amylases. The sequence is that of Alpha-amylase inhibitor DR4 from Delonix regia (Royal poinciana).